A 254-amino-acid polypeptide reads, in one-letter code: 2-dehydro-3-deoxy-D-gluconate 5-dehydrogenase (254 aa).

NAD(+) is bound at residue 16–40; the sequence is LVTGPGTGIGQGIAKALAGAGADII. A substrate-binding site is contributed by Ser146. Catalysis depends on Tyr159, which acts as the Proton acceptor.

It belongs to the short-chain dehydrogenases/reductases (SDR) family.

The enzyme catalyses 2-dehydro-3-deoxy-D-gluconate + NAD(+) = 3-deoxy-D-glycero-2,5-hexodiulosonate + NADH + H(+). It functions in the pathway glycan metabolism; pectin degradation; 2-dehydro-3-deoxy-D-gluconate from pectin: step 5/5. Functionally, catalyzes the reduction of 2,5-diketo-3-deoxygluconate (DKII or 4,6-dihydroxy-2,5-dioxohexanoate) into 2-keto-3-deoxygluconate (KDG or 2-dehydro-3-deoxygluconate) with a concomitant oxidation of NADH. The polypeptide is 2-dehydro-3-deoxy-D-gluconate 5-dehydrogenase (kduD) (Bacillus subtilis (strain 168)).